The sequence spans 663 residues: Bicarbonate transport ATP-binding protein CmpC (663 aa).

An ABC transporter domain is found at 5 to 239; that stretch reads VAVENIEKSF…RPRKRMDVVH (235 aa). 42–49 is an ATP binding site; the sequence is GHSGCGKS. A cmpA-like region spans residues 281–663; the sequence is LEIGYVPLMA…LDQPRPIAAA (383 aa).

It belongs to the ABC transporter superfamily. Nitrate/nitrite/cyanate uptake transporter (NitT) (TC 3.A.1.16) family. As to quaternary structure, the complex is composed of two ATP-binding proteins (CmpC and CmpD), a transmembrane protein (CmpB) and a solute-binding protein (CmpA).

The protein resides in the cell inner membrane. Part of the ABC transporter complex CmpABCD involved in bicarbonate transport. Responsible for energy coupling to the transport system. In Synechococcus elongatus (strain ATCC 33912 / PCC 7942 / FACHB-805) (Anacystis nidulans R2), this protein is Bicarbonate transport ATP-binding protein CmpC (cmpC).